Consider the following 130-residue polypeptide: Histone H2A type 1 (130 aa).

Residues 1–22 (MSGRGKQGGKARAKAKTRSSRA) form a disordered region. An N-acetylserine modification is found at serine 2. Serine 2 carries the post-translational modification Phosphoserine; by RPS6KA5. Citrulline; alternate is present on arginine 4. The residue at position 4 (arginine 4) is a Symmetric dimethylarginine; by PRMT5; alternate. The residue at position 6 (lysine 6) is an N6-(2-hydroxyisobutyryl)lysine. Residues 7–19 (QGGKARAKAKTRS) are compositionally biased toward basic residues. Lysine 10 carries the post-translational modification N6-(2-hydroxyisobutyryl)lysine; alternate. Lysine 10 carries the N6-lactoyllysine; alternate modification. Lysine 10 carries the post-translational modification N6-succinyllysine; alternate. Residues lysine 14 and lysine 16 each participate in a glycyl lysine isopeptide (Lys-Gly) (interchain with G-Cter in ubiquitin) cross-link. N6-(2-hydroxyisobutyryl)lysine; alternate is present on lysine 37. Position 37 is an N6-(beta-hydroxybutyryl)lysine; alternate (lysine 37). Lysine 37 bears the N6-crotonyllysine; alternate mark. 2 positions are modified to N6-(2-hydroxyisobutyryl)lysine: lysine 75 and lysine 76. Lysine 96 carries the N6-(2-hydroxyisobutyryl)lysine; alternate modification. Lysine 96 bears the N6-succinyllysine; alternate mark. Lysine 96 is subject to N6-glutaryllysine; alternate. N6-glutaryllysine is present on lysine 100. An N5-methylglutamine modification is found at glutamine 105. At lysine 119 the chain carries N6-(2-hydroxyisobutyryl)lysine; alternate. Lysine 119 and lysine 120 each carry N6-crotonyllysine; alternate. N6-glutaryllysine; alternate is present on residues lysine 119 and lysine 120. Lysine 120 participates in a covalent cross-link: Glycyl lysine isopeptide (Lys-Gly) (interchain with G-Cter in ubiquitin); alternate. Threonine 121 carries the post-translational modification Phosphothreonine; by DCAF1. Lysine 126 carries the post-translational modification N6-crotonyllysine; alternate. The residue at position 126 (lysine 126) is an N6-glutaryllysine; alternate.

Belongs to the histone H2A family. In terms of assembly, the nucleosome is a histone octamer containing two molecules each of H2A, H2B, H3 and H4 assembled in one H3-H4 heterotetramer and two H2A-H2B heterodimers. The octamer wraps approximately 147 bp of DNA. Interacts with VRK1; the interaction is mediated by the nucleosome acidic patch, a cluster of negatively charged residues of H2A and H2B forming a cleft within the nucleosome core. Deiminated on Arg-4 in granulocytes upon calcium entry. Post-translationally, monoubiquitination of Lys-120 (H2AK119Ub) by RING1, TRIM37 and RNF2/RING2 complex gives a specific tag for epigenetic transcriptional repression and participates in X chromosome inactivation of female mammals. It is involved in the initiation of both imprinted and random X inactivation. Ubiquitinated H2A is enriched in inactive X chromosome chromatin. Ubiquitination of H2A functions downstream of methylation of 'Lys-27' of histone H3 (H3K27me). H2AK119Ub by RNF2/RING2 can also be induced by ultraviolet and may be involved in DNA repair. Following DNA double-strand breaks (DSBs), it is ubiquitinated through 'Lys-63' linkage of ubiquitin moieties by the E2 ligase UBE2N and the E3 ligases RNF8 and RNF168, leading to the recruitment of repair proteins to sites of DNA damage. Ubiquitination at Lys-14 and Lys-16 (H2AK13Ub and H2AK15Ub, respectively) in response to DNA damage is initiated by RNF168 that mediates monoubiquitination at these 2 sites, and 'Lys-63'-linked ubiquitin are then conjugated to monoubiquitin; RNF8 is able to extend 'Lys-63'-linked ubiquitin chains in vitro. H2AK119Ub and ionizing radiation-induced 'Lys-63'-linked ubiquitination (H2AK13Ub and H2AK15Ub) are distinct events. In terms of processing, phosphorylation on Ser-2 (H2AS1ph) is enhanced during mitosis. Phosphorylation on Ser-2 by RPS6KA5/MSK1 directly represses transcription. Acetylation of H3 inhibits Ser-2 phosphorylation by RPS6KA5/MSK1. Phosphorylation at Thr-121 (H2AT120ph) by DCAF1 is present in the regulatory region of many tumor suppresor genes and down-regulates their transcription. Symmetric dimethylation on Arg-4 by the PRDM1/PRMT5 complex may play a crucial role in the germ-cell lineage. Post-translationally, glutamine methylation at Gln-105 (H2AQ104me) by FBL is specifically dedicated to polymerase I. It is present at 35S ribosomal DNA locus and impairs binding of the FACT complex. In terms of processing, crotonylation (Kcr) is specifically present in male germ cells and marks testis-specific genes in post-meiotic cells, including X-linked genes that escape sex chromosome inactivation in haploid cells. Crotonylation marks active promoters and enhancers and confers resistance to transcriptional repressors. It is also associated with post-meiotically activated genes on autosomes. Lactylated in macrophages by EP300/P300 by using lactoyl-CoA directly derived from endogenous or exogenous lactate, leading to stimulates gene transcription.

It localises to the nucleus. The protein localises to the chromosome. Its function is as follows. Core component of nucleosome. Nucleosomes wrap and compact DNA into chromatin, limiting DNA accessibility to the cellular machineries which require DNA as a template. Histones thereby play a central role in transcription regulation, DNA repair, DNA replication and chromosomal stability. DNA accessibility is regulated via a complex set of post-translational modifications of histones, also called histone code, and nucleosome remodeling. The polypeptide is Histone H2A type 1 (Bos taurus (Bovine)).